The sequence spans 694 residues: Cyclic nucleotide-gated channel alpha-3 (694 aa).

2 stretches are compositionally biased toward polar residues: residues M1 to P11 and S112 to S123. Disordered stretches follow at residues M1–D24 and E109–K152. The Cytoplasmic portion of the chain corresponds to M1–R170. A helical transmembrane segment spans residues W171–F192. Over D193–E198 the chain is Extracellular. Residues Y199–L219 traverse the membrane as a helical segment. Over V220–T246 the chain is Cytoplasmic. A helical membrane pass occupies residues T247–V266. Residues G267 to Y270 lie on the Extracellular side of the membrane. A helical transmembrane segment spans residues P271–F288. The Cytoplasmic portion of the chain corresponds to D289 to P298. The segment at P298 to M406 is ion conduction pathway. A helical transmembrane segment spans residues N299–Y321. At F322–R347 the chain is on the extracellular side. The N-linked (GalNAc...) asparagine glycan is linked to N339. 2 consecutive transmembrane segments (helical) span residues L348–Y378 and L379–I403. Residues T365–E368 form a selectivity filter region. At S404–Q694 the chain is on the cytoplasmic side. A C-linker region spans residues A408–D485. The interval A488–K608 is cyclic nucleotide-binding domain. G548, E549, S551, R564, T565, and D609 together coordinate 3',5'-cyclic GMP. Positions L626–V669 form a coiled coil. The interval L662 to Q694 is disordered.

It belongs to the cyclic nucleotide-gated cation channel (TC 1.A.1.5) family. CNGA3 subfamily. Forms heterotetrameric channels composed of CNGA3 and CNGB3 subunits with 3:1 stoichiometry. As to expression, prominently expressed in retina.

It is found in the cell membrane. It catalyses the reaction Ca(2+)(in) = Ca(2+)(out). The enzyme catalyses Na(+)(in) = Na(+)(out). The catalysed reaction is K(+)(in) = K(+)(out). It carries out the reaction NH4(+)(in) = NH4(+)(out). It catalyses the reaction Rb(+)(in) = Rb(+)(out). The enzyme catalyses Li(+)(in) = Li(+)(out). The catalysed reaction is Cs(+)(in) = Cs(+)(out). With respect to regulation, inhibited by L-cis-diltiazem. Functionally, pore-forming subunit of the cone cyclic nucleotide-gated channel. Mediates cone photoresponses at bright light converting transient changes in intracellular cGMP levels into electrical signals. In the dark, cGMP levels are high and keep the channel open enabling a steady inward current carried by Na(+) and Ca(2+) ions that leads to membrane depolarization and neurotransmitter release from synaptic terminals. Upon photon absorption cGMP levels decline leading to channel closure and membrane hyperpolarization that ultimately slows neurotransmitter release and signals the presence of light, the end point of the phototransduction cascade. Pore-forming subunit of the gustatory cyclic nucleotide-gated channel. In the taste buds, may sense oral extracellular pH and conduct ion currents that modulate the excitability of taste cells. Conducts cGMP- and cAMP-gated ion currents, with permeability for monovalent and divalent cations. The polypeptide is Cyclic nucleotide-gated channel alpha-3 (Homo sapiens (Human)).